A 328-amino-acid polypeptide reads, in one-letter code: Malate dehydrogenase 1 (328 aa).

12-18 provides a ligand contact to NAD(+); sequence GAAGQIA. Arg93 and Arg99 together coordinate substrate. NAD(+)-binding positions include Asn106, Gln113, and 130 to 132; that span reads VGN. 2 residues coordinate substrate: Asn132 and Arg163. His188 functions as the Proton acceptor in the catalytic mechanism.

The protein belongs to the LDH/MDH superfamily. MDH type 2 family.

It catalyses the reaction (S)-malate + NAD(+) = oxaloacetate + NADH + H(+). Its function is as follows. Catalyzes the reversible oxidation of malate to oxaloacetate. This chain is Malate dehydrogenase 1, found in Burkholderia vietnamiensis (strain G4 / LMG 22486) (Burkholderia cepacia (strain R1808)).